The sequence spans 93 residues: Acylphosphatase (93 aa).

A disulfide bond links Cys-5 and Cys-49. Residues 5 to 93 (CIIAWVYGRV…ETLTGFSIRY (89 aa)) form the Acylphosphatase-like domain. Asn-38 is an active-site residue.

This sequence belongs to the acylphosphatase family.

It carries out the reaction an acyl phosphate + H2O = a carboxylate + phosphate + H(+). In Salmonella paratyphi A (strain ATCC 9150 / SARB42), this protein is Acylphosphatase.